Here is a 280-residue protein sequence, read N- to C-terminus: Large ribosomal subunit protein uL2 (280 aa).

2 disordered regions span residues leucine 33 to glycine 55 and alanine 224 to glutamine 266. Residues threonine 256–glutamine 266 are compositionally biased toward basic residues.

The protein belongs to the universal ribosomal protein uL2 family. As to quaternary structure, part of the 50S ribosomal subunit. Forms a bridge to the 30S subunit in the 70S ribosome.

In terms of biological role, one of the primary rRNA binding proteins. Required for association of the 30S and 50S subunits to form the 70S ribosome, for tRNA binding and peptide bond formation. It has been suggested to have peptidyltransferase activity; this is somewhat controversial. Makes several contacts with the 16S rRNA in the 70S ribosome. The chain is Large ribosomal subunit protein uL2 from Ruegeria pomeroyi (strain ATCC 700808 / DSM 15171 / DSS-3) (Silicibacter pomeroyi).